The primary structure comprises 581 residues: Jasmonoyl--L-amino acid synthetase GH3.5 (581 aa).

S92 provides a ligand contact to ATP. Jasmonate is bound at residue S95. Residues T115, N161, and 324-329 (GASEGW) contribute to the ATP site. Residue 159–163 (TTNLY) participates in an L-alpha-amino acid binding. Jasmonate-binding positions include 321 to 324 (ADYG) and S326. An L-alpha-amino acid is bound at residue 534–538 (EILDH). ATP is bound at residue K561.

This sequence belongs to the IAA-amido conjugating enzyme family. As to expression, expressed in green shoots, roots and flowers.

It catalyses the reaction a jasmonate + an L-alpha-amino acid + ATP = a jasmonyl-L-amino acid + AMP + diphosphate + H(+). In terms of biological role, catalyzes the synthesis of jasmonate-amino acid conjugates by adenylation. Catalyzes the conjugation of jasmonate (JA) to Ile when expressed in a heterologous system (E.coli). Catalyzes in vitro the conjugation of jasmonate (JA) to Ile, Phe, Cys, Leu, Met, Ala, Val and Trp. Involved in the production of JA-Ile in response to infection by the rice blast fungus Magnaporthe oryzae. Required for the accumulation of the flavonoid phytoalexin sakuranetin in response to infection by the rice blast fungus. Involved in herbivory-induced JA-Ile accumulation. Involved in the production of JA-Ile in response to wounding. Required for modulation of light and JA signaling in photomorphogenesis. Required for normal seed development. Required for optimal flower opening and closing and anther dehiscence. May catalyze the synthesis of indole-3-acetic acid (IAA)-amino acid conjugates, providing a mechanism for the plant to cope with the presence of excess auxin. The polypeptide is Jasmonoyl--L-amino acid synthetase GH3.5 (Oryza sativa subsp. japonica (Rice)).